The primary structure comprises 206 residues: Ribosomal RNA small subunit methyltransferase G (206 aa).

Residues glycine 73, leucine 78, valine 124–glutamate 125, and arginine 139 contribute to the S-adenosyl-L-methionine site.

This sequence belongs to the methyltransferase superfamily. RNA methyltransferase RsmG family.

It is found in the cytoplasm. It catalyses the reaction guanosine(527) in 16S rRNA + S-adenosyl-L-methionine = N(7)-methylguanosine(527) in 16S rRNA + S-adenosyl-L-homocysteine. In terms of biological role, specifically methylates the N7 position of guanine in position 527 of 16S rRNA. This chain is Ribosomal RNA small subunit methyltransferase G, found in Photorhabdus laumondii subsp. laumondii (strain DSM 15139 / CIP 105565 / TT01) (Photorhabdus luminescens subsp. laumondii).